We begin with the raw amino-acid sequence, 414 residues long: MDSRTTRYLKSCFQKHYKTAEIGLPDHLPNREWAFIFYDDMPEKMMHRHKSFGSPGEALDYLYGMAPAHVYNSTAYYEYPDARKMNEKNWLGAELIFDLDADHLPNAPRNYADMLELVKKETLKLMDFLLDDFGFSEQDIELVFSGGRGYHFHITSPKVLTLGSSERREIVNYLSGRDIDFKYFFREVSMDGDFGTGSKSFKGIKNLPVKCTLVGYDSGWGKRVALYLTDYMKAECGKKYKKDMFPELRRHEKVGDTTIKKLINITNSENGLKDILERGRLDFGVRNFKEIAAYFMQESMENFLNRFGASVDEPVTADIKRLIRVPGSLHGGSGMLVKKLALCELEKFNPLNDAVVFGERPVKITVSKPFSVQLKGKDLRIEEGIQEVPEYAAVYLICRGVAEYGYRRNQPDAV.

Active-site residues include aspartate 98, aspartate 100, and aspartate 312.

It belongs to the eukaryotic-type primase small subunit family. In terms of assembly, heterodimer of a small subunit (PriS) and a large subunit (PriL). It depends on Mg(2+) as a cofactor. Requires Mn(2+) as cofactor.

Catalytic subunit of DNA primase, an RNA polymerase that catalyzes the synthesis of short RNA molecules used as primers for DNA polymerase during DNA replication. The small subunit contains the primase catalytic core and has DNA synthesis activity on its own. Binding to the large subunit stabilizes and modulates the activity, increasing the rate of DNA synthesis while decreasing the length of the DNA fragments, and conferring RNA synthesis capability. The DNA polymerase activity may enable DNA primase to also catalyze primer extension after primer synthesis. May also play a role in DNA repair. This chain is DNA primase small subunit PriS, found in Methanosarcina mazei (strain ATCC BAA-159 / DSM 3647 / Goe1 / Go1 / JCM 11833 / OCM 88) (Methanosarcina frisia).